A 109-amino-acid polypeptide reads, in one-letter code: Small ribosomal subunit protein uS17 (109 aa).

It belongs to the universal ribosomal protein uS17 family. Part of the 30S ribosomal subunit.

Its function is as follows. One of the primary rRNA binding proteins, it binds specifically to the 5'-end of 16S ribosomal RNA. The protein is Small ribosomal subunit protein uS17 of Methanococcus vannielii.